A 349-amino-acid chain; its full sequence is N-formyl peptide receptor 3 (349 aa).

Over 1–27 the chain is Extracellular; that stretch reads METNFSIPLNETEEVLPEPAGHTVLWI. N-linked (GlcNAc...) asparagine glycosylation is found at Asn-4 and Asn-10. The chain crosses the membrane as a helical span at residues 28–50; sequence FSLLVHGVTFVFGVLGNGLVIWV. At 51–61 the chain is on the cytoplasmic side; the sequence is AGFRMTRTVNT. The helical transmembrane segment at 62-83 threads the bilayer; sequence ICYLNLALADFSFSAILPFRMV. Over 84–100 the chain is Extracellular; that stretch reads SVAMREKWPFGSFLCKL. Residues Cys-98 and Cys-176 are joined by a disulfide bond. The chain crosses the membrane as a helical span at residues 101-121; sequence VHVMIDINLFVSVYLITIIAL. Residues 122 to 140 lie on the Cytoplasmic side of the membrane; that stretch reads DRCICVLHPAWAQNHRTMS. A helical transmembrane segment spans residues 141-162; it reads LAKRVMTGLWILTIVLTLPNFI. The Extracellular segment spans residues 163–205; the sequence is FWTTIRTTNGDTYCIFNFAFWGDTAVERLNVFITMAKVFLILH. Residues 206–226 form a helical membrane-spanning segment; the sequence is FIIGFSMPMSIITVCYGIIAA. At 227–242 the chain is on the cytoplasmic side; that stretch reads KIHRNHMIKSSRPLRV. A helical transmembrane segment spans residues 243 to 266; that stretch reads FAAVVASFFICWFPYELIGILMAV. Residues 267 to 286 are Extracellular-facing; that stretch reads WLKEMLLNGKYKIILVLINP. The chain crosses the membrane as a helical span at residues 287-306; sequence TSSLAFFNSCLNPILYVFMG. The Cytoplasmic segment spans residues 307–349; it reads RNFQERLIRSLPTSLERALTEVPDSAQTSNTHTTSASPPEETE. The tract at residues 327–349 is disordered; the sequence is EVPDSAQTSNTHTTSASPPEETE. Polar residues predominate over residues 331 to 343; it reads SAQTSNTHTTSAS.

The protein belongs to the G-protein coupled receptor 1 family.

The protein localises to the cell membrane. Low affinity receptor for N-formyl-methionyl peptides, which are powerful neutrophils chemotactic factors. Binding of FMLP to the receptor causes activation of neutrophils. This response is mediated via a G-protein that activates a phosphatidylinositol-calcium second messenger system. The polypeptide is N-formyl peptide receptor 3 (FPR3) (Pan troglodytes (Chimpanzee)).